Here is a 534-residue protein sequence, read N- to C-terminus: Glucomannan 4-beta-mannosyltransferase 2 (534 aa).

Residues 36–56 (VIVPLLQLAVYICLLMSVMLL) traverse the membrane as a helical segment. Residue D136 is part of the active site. Substrate is bound by residues D195 and D197. Residue D289 is part of the active site. 4 helical membrane passes run 368–388 (IIAHWVTFCFYCVVLPLTILV), 404–426 (IITILNSVGTPRSIHLLFYWILF), 483–503 (LNTLELGFAAFLFVCGCYDFV), and 509–529 (YFIYLFLQTMSFFISGLGWIG).

It belongs to the glycosyltransferase 2 family. Plant cellulose synthase-like A subfamily.

It localises to the golgi apparatus membrane. The enzyme catalyses GDP-mannose + (glucomannan)n = GDP + (glucomannan)n+1.. Functionally, possesses glucomannan synthase and mannan synthase activities in vitro. Mannan synthase consists of a 4-beta-mannosyltransferase activity on mannan using GDP-mannose. The beta-1,4-mannan product is the backbone for galactomannan synthesis by galactomannan galactosyltransferase. Galactomannan is a noncellulosic polysaccharides of plant cell wall. The polypeptide is Glucomannan 4-beta-mannosyltransferase 2 (Arabidopsis thaliana (Mouse-ear cress)).